A 589-amino-acid polypeptide reads, in one-letter code: Mitogen-activated protein kinase 8 (589 aa).

Residues 18 to 56 (RPSSSSSSSSSNNNNNNHEQPIFNSSSFSSSSNPNHSAN) are disordered. Low complexity-rich tracts occupy residues 20-34 (SSSS…NNNN) and 41-56 (NSSS…HSAN). Residues 104-395 (YQIQEVVGKG…AEDALADPYF (292 aa)) form the Protein kinase domain. Residues 110–118 (VGKGSYGVV) and Lys-133 contribute to the ATP site. Asp-230 acts as the Proton acceptor in catalysis. Thr-266 bears the Phosphothreonine mark. The short motif at 266–268 (TDY) is the TXY element. Position 268 is a phosphotyrosine (Tyr-268). A Phosphothreonine modification is found at Thr-271. Residues 474–589 (NQGKPGAAGG…TDKVASLHNS (116 aa)) form a disordered region.

The protein belongs to the protein kinase superfamily. CMGC Ser/Thr protein kinase family. MAP kinase subfamily. Interacts with CAM3, CAM4 and CAM7 in an calcium-dependent manner. Post-translationally, dually phosphorylated on Thr-266 and Tyr-268, which activates the enzyme. Autophosphorylated. As to expression, ubiquitous.

The enzyme catalyses L-seryl-[protein] + ATP = O-phospho-L-seryl-[protein] + ADP + H(+). The catalysed reaction is L-threonyl-[protein] + ATP = O-phospho-L-threonyl-[protein] + ADP + H(+). Its activity is regulated as follows. Activated by threonine and tyrosine phosphorylation. Activated by two independent mechanisms, the binding of CAMs in a calcium-dependent manner and the phosphorylation by MAP kinase kinase MKK3. Activated in response to mechanical wounding, hydrogen peroxide and jasmonic acid (JA). MKK3-MPK8 and CAMs-MPK8 modules negatively regulates ROS accumulation through controlling expression of the RBOHD gene during wounding. The chain is Mitogen-activated protein kinase 8 (MPK8) from Arabidopsis thaliana (Mouse-ear cress).